The chain runs to 148 residues: D-aminoacyl-tRNA deacylase (148 aa).

The short motif at 137 to 138 is the Gly-cisPro motif, important for rejection of L-amino acids element; sequence GP.

It belongs to the DTD family. Homodimer.

The protein localises to the cytoplasm. The catalysed reaction is glycyl-tRNA(Ala) + H2O = tRNA(Ala) + glycine + H(+). The enzyme catalyses a D-aminoacyl-tRNA + H2O = a tRNA + a D-alpha-amino acid + H(+). Its function is as follows. An aminoacyl-tRNA editing enzyme that deacylates mischarged D-aminoacyl-tRNAs. Also deacylates mischarged glycyl-tRNA(Ala), protecting cells against glycine mischarging by AlaRS. Acts via tRNA-based rather than protein-based catalysis; rejects L-amino acids rather than detecting D-amino acids in the active site. By recycling D-aminoacyl-tRNA to D-amino acids and free tRNA molecules, this enzyme counteracts the toxicity associated with the formation of D-aminoacyl-tRNA entities in vivo and helps enforce protein L-homochirality. The polypeptide is D-aminoacyl-tRNA deacylase (Oenococcus oeni (strain ATCC BAA-331 / PSU-1)).